A 273-amino-acid chain; its full sequence is Nucleotide-binding protein TT_C1664 (273 aa).

Residue 8 to 15 coordinates ATP; that stretch reads GLSGAGKT. Residue 57 to 60 participates in GTP binding; it reads DARA.

It belongs to the RapZ-like family.

Displays ATPase and GTPase activities. This chain is Nucleotide-binding protein TT_C1664, found in Thermus thermophilus (strain ATCC BAA-163 / DSM 7039 / HB27).